A 359-amino-acid chain; its full sequence is WW domain-binding protein wbp-11 (359 aa).

Disordered stretches follow at residues 1-38, 235-264, and 317-341; these read MPSI…DRQQ, PSSY…NPMG, and PGDN…QKQA. A compositionally biased stretch (basic and acidic residues) spans 8-27; that stretch reads KSGERYRAPTDQARKMDRKK. Positions 245-256 are enriched in basic residues; the sequence is MPHHHHHHHPHA.

In terms of biological role, activates pre-mRNA splicing. May inhibit PP1 phosphatase activity. In Caenorhabditis elegans, this protein is WW domain-binding protein wbp-11.